A 218-amino-acid polypeptide reads, in one-letter code: Probable signal peptidase I-2 (218 aa).

Topologically, residues 1–26 (MTENIVRETSKKKESPPENTWLELGK) are cytoplasmic. Residues 27–43 (TMVTAVILAIGIRTFVA) form a helical membrane-spanning segment. Residues 44-218 (EARYIPSSSM…ISPQTVPESR (175 aa)) lie on the Periplasmic side of the membrane. Catalysis depends on residues Ser52 and Lys100.

This sequence belongs to the peptidase S26 family.

The protein localises to the cell membrane. It catalyses the reaction Cleavage of hydrophobic, N-terminal signal or leader sequences from secreted and periplasmic proteins.. The sequence is that of Probable signal peptidase I-2 (lepB2) from Synechocystis sp. (strain ATCC 27184 / PCC 6803 / Kazusa).